A 92-amino-acid polypeptide reads, in one-letter code: MASLSHILVLCVGLLAMVNAEAPQEHDPFTYDYQSLRIGGLIIAGILFILGILIVLSRRCRCKFNQQQRTGEPDEEEGTFRSSIRRLSTRRR.

A signal peptide spans 1–20; the sequence is MASLSHILVLCVGLLAMVNA. The Extracellular segment spans residues 21-35; the sequence is EAPQEHDPFTYDYQS. A helical transmembrane segment spans residues 36-56; it reads LRIGGLIIAGILFILGILIVL. At 57 to 92 the chain is on the cytoplasmic side; it reads SRRCRCKFNQQQRTGEPDEEEGTFRSSIRRLSTRRR. Cys-60 carries S-palmitoyl cysteine lipidation. Cys-62 is subject to S-glutathionyl cysteine; alternate. Cys-62 carries S-palmitoyl cysteine; alternate lipidation. The disordered stretch occupies residues 65 to 92; it reads NQQQRTGEPDEEEGTFRSSIRRLSTRRR. Phosphothreonine is present on Thr-79. Ser-82 carries the phosphoserine modification. A Phosphoserine; by PKA and PKC modification is found at Ser-83. Residues 83–92 show a composition bias toward basic residues; that stretch reads SIRRLSTRRR. Ser-88 is subject to Phosphoserine; by PKA. At Thr-89 the chain carries Phosphothreonine; by PKC.

Belongs to the FXYD family. Homotetramer. Monomer. Regulatory subunit of the sodium/potassium-transporting ATPase (NKA) which is composed of a catalytic alpha subunit, an auxiliary non-catalytic beta subunit and an additional regulatory subunit. The monomeric form associates with NKA while the oligomeric form does not. Interacts with the catalytic alpha-1 subunit ATP1A1. Also interacts with the catalytic alpha-2 and alpha-3 subunits ATP1A2 and ATP1A3. Very little interaction with ATP1A1, ATP1A2 or ATP1A3 when phosphorylated at Ser-83. Interacts with the non-catalytic beta-1 subunit ATP1B1. Oxidative stress decreases interaction with ATP1A1 but increases interaction with ATP1B1. In terms of processing, major plasma membrane substrate for cAMP-dependent protein kinase (PKA) and protein kinase C (PKC) in several different tissues. Phosphorylated in response to insulin and adrenergic stimulation. Phosphorylation at Ser-88 stimulates sodium/potassium-transporting ATPase activity while the unphosphorylated form inhibits sodium/potassium-transporting ATPase activity. Phosphorylation increases tetramerization, decreases binding to ATP1A1 and reduces inhibition of ATP1A1 activity. Phosphorylation at Ser-83 leads to greatly reduced interaction with ATP1A1, ATP1A2 and ATP1A3. May be phosphorylated by DMPK. Post-translationally, palmitoylation increases half-life and stability and is enhanced upon phosphorylation at Ser-88 by PKA. As to expression, in the brain, detected in cerebellum and choroid plexus (at protein level).

The protein localises to the cell membrane. It localises to the sarcolemma. The protein resides in the apical cell membrane. It is found in the membrane. Its subcellular location is the caveola. The protein localises to the T-tubule. Functionally, associates with and regulates the activity of the sodium/potassium-transporting ATPase (NKA) which transports Na(+) out of the cell and K(+) into the cell. Inhibits NKA activity in its unphosphorylated state and stimulates activity when phosphorylated. Reduces glutathionylation of the NKA beta-1 subunit ATP1B1, thus reversing glutathionylation-mediated inhibition of ATP1B1. Contributes to female sexual development by maintaining the excitability of neurons which secrete gonadotropin-releasing hormone. In Bos taurus (Bovine), this protein is Phospholemman.